The chain runs to 593 residues: Lipolysis-stimulated lipoprotein receptor (593 aa).

The first 35 residues, 1-35, serve as a signal peptide directing secretion; it reads MAPAAGACAGAPDSHPATVVFVCLFLIIFCPDPAS. Residues 36 to 206 lie on the Extracellular side of the membrane; it reads AIQVTVSDPY…PGFRAGPLED (171 aa). The region spanning 89–181 is the Ig-like V-type domain; that stretch reads PASVDNQLNA…DLDGNNEAYA (93 aa). Residues C113 and C165 are joined by a disulfide bond. The helical transmembrane segment at 207–227 threads the bilayer; sequence WLFVVVVCLASLLLFLLLGIC. Residues 228 to 593 are Cytoplasmic-facing; that stretch reads WCQCCPHTCC…LALSRESLVV (366 aa). Residue T283 is modified to Phosphothreonine. A phosphoserine mark is found at S308, S314, S332, S375, and S379. Positions 375-387 are enriched in basic and acidic residues; it reads SEVTSLHEDDWRS. The segment at 375–578 is disordered; the sequence is SEVTSLHEDD…ETDSQASRER (204 aa). The residue at position 396 (T396) is a Phosphothreonine. Phosphoserine occurs at positions 407, 410, and 436. Residues 435–444 show a composition bias toward basic and acidic residues; the sequence is RSVDALDDIN. Positions 445 to 460 are enriched in low complexity; it reads RPGSTESGRSSPPSSG. S471 and S473 each carry phosphoserine. A compositionally biased stretch (basic and acidic residues) spans 472–550; sequence RSRDDLYDPD…GSGERRRVYR (79 aa). Y478 carries the phosphotyrosine modification. S575 carries the post-translational modification Phosphoserine. K582 is covalently cross-linked (Glycyl lysine isopeptide (Lys-Gly) (interchain with G-Cter in ubiquitin)). Phosphoserine is present on residues S587 and S590.

It belongs to the immunoglobulin superfamily. LISCH7 family. In terms of assembly, homotrimer or homotetramer constituted of isoform 1 and/or isoform 2 and isoform 3. Assembles into cell-cell contacts. Interacts (via the cytoplasmic domain) with MARVELD2 (via C-terminal cytoplasmic domain); the interaction is required to recruit MARVELD2 to tricellular contacts. Interacts with OCLN. Post-translationally, phosphorylation at Ser-308 by MAPK8/JNK1 and MAPK9/JNK2 may be required for exclusive localization at tricellular tight junstions. In terms of processing, polyubiquitinated at Lys-582 via 'Lys-63'-linked ubiquitin chains; deubiquitinated by USP53. Specifically expressed in liver. Also detected in kidney and lung.

It is found in the cell membrane. Its subcellular location is the cell junction. The protein resides in the tight junction. Its function is as follows. Probable role in the clearance of triglyceride-rich lipoprotein from blood. Binds chylomicrons, LDL and VLDL in presence of free fatty acids and allows their subsequent uptake in the cells. Maintains epithelial barrier function by recruiting MARVELD2/tricellulin to tricellular tight junctions. The sequence is that of Lipolysis-stimulated lipoprotein receptor from Rattus norvegicus (Rat).